Here is a 188-residue protein sequence, read N- to C-terminus: MLKKSLSTAVVLVTLLLSFTLTACGGVGIASLQRYSDTKDGYEFLYPNGWIGVDVKGASPGVDVVFRDLIERDENLSVIISEIPSDKTLTDLGTATDVGYRFMKTVNDASQGDRQAELINAEARDEDGQVYYTLEYRVLVGDNVERHDLASVTTNRGKLITFDLSTAEDRWDTVKSLFDTVASSFHVY.

The signal sequence occupies residues 1 to 23 (MLKKSLSTAVVLVTLLLSFTLTA). A lipid anchor (N-palmitoyl cysteine) is attached at cysteine 24. A lipid anchor (S-diacylglycerol cysteine) is attached at cysteine 24.

The protein belongs to the PsbP family. CyanoP subfamily. In terms of assembly, monomer. Present in about 3% of photosystem II (PSII) preparations. Purifies with partially assembled PSII complexes, in addition to a small amount of monomeric and dimeric PSII, and trimeric PSI.

Its subcellular location is the cellular thylakoid membrane. In terms of biological role, plays a role in the early stages of photosystem II (PSII) assembly; binds to D2 (psbD) and may facilitate its incorporation into PSII. Required for optimal photoautotrophic growth in the absence of Ca(2+) or Cl(-), functions in optimizing PSII water oxidation/O(2) evolving activity. Might be involved in assembly of the oxygen evolving complex. This chain is CyanoP, found in Synechocystis sp. (strain ATCC 27184 / PCC 6803 / Kazusa).